Here is a 180-residue protein sequence, read N- to C-terminus: Large ribosomal subunit protein uL6 (180 aa).

The protein belongs to the universal ribosomal protein uL6 family. In terms of assembly, part of the 50S ribosomal subunit.

Functionally, this protein binds to the 23S rRNA, and is important in its secondary structure. It is located near the subunit interface in the base of the L7/L12 stalk, and near the tRNA binding site of the peptidyltransferase center. This chain is Large ribosomal subunit protein uL6, found in Anaeromyxobacter dehalogenans (strain 2CP-1 / ATCC BAA-258).